The chain runs to 190 residues: Putative 3-methyladenine DNA glycosylase (190 aa).

The protein belongs to the DNA glycosylase MPG family.

The chain is Putative 3-methyladenine DNA glycosylase from Chlamydia abortus (strain DSM 27085 / S26/3) (Chlamydophila abortus).